A 252-amino-acid polypeptide reads, in one-letter code: MKITPVKALTDNYIWMIQHGNHAVCVDPSEPSPVLEFLVRNRLMLAQTWVTHPHPDHEGGAAALWRGYMESPVYGESDIEAATHTVTAGTQFTFGDGQVTVWATPGHTDRHTSYLLETSDGIHVFCGDTLFSAGCGRVFTGTIEQLYDSFQRFNRLPENTLFYPAHEYTAANLRFAAHIEPDNADIQTALKAAAHTPTLPVTLAHERRVNPFLRVDLPHVRDRAEALSGKTLNSSLDTFVALRELKNQYRTK.

Zn(2+)-binding residues include H52, H54, D56, H57, H107, D128, and H166.

Belongs to the metallo-beta-lactamase superfamily. Glyoxalase II family. As to quaternary structure, monomer. Zn(2+) serves as cofactor.

The catalysed reaction is an S-(2-hydroxyacyl)glutathione + H2O = a 2-hydroxy carboxylate + glutathione + H(+). Its pathway is secondary metabolite metabolism; methylglyoxal degradation; (R)-lactate from methylglyoxal: step 2/2. Thiolesterase that catalyzes the hydrolysis of S-D-lactoyl-glutathione to form glutathione and D-lactic acid. The sequence is that of Hydroxyacylglutathione hydrolase from Neisseria meningitidis serogroup C (strain 053442).